The following is a 677-amino-acid chain: Heat shock transcription factor (677 aa).

2 disordered regions span residues 1–56 (MGHN…DDSN) and 115–164 (STSS…SQQP). 2 stretches are compositionally biased toward polar residues: residues 115–131 (STSS…TNAT) and 143–164 (QPSS…SQQP). The DNA-binding element occupies 193–297 (ARPAFVNKLW…EYLLENIVRQ (105 aa)). The tract at residues 320-373 (ELETVKYNQLAIAEDLKRITKDNEMLWKENMMARERHQSQQQVLEKLLRFLSSV) is involved in trimerization. 2 stretches are compositionally biased toward low complexity: residues 400-416 (NHMS…INPN) and 457-501 (RSMS…QGQQ). Disordered stretches follow at residues 400–444 (NHMS…VPLQ), 457–541 (RSMS…NQYS), and 606–677 (KLNP…RRAA). Positions 466 to 677 (NLNQRQSPQN…NNGQKRRRAA (212 aa)) are activatory. Composition is skewed to polar residues over residues 502 to 541 (FSYP…NQYS) and 629 to 641 (FANT…SEQP). Basic and acidic residues predominate over residues 650–669 (EELRNSRLHEPDRSFEEKNN).

This sequence belongs to the HSF family. In terms of assembly, homotrimer. Homotrimerization increases the affinity of HSF1 to DNA. Post-translationally, exhibits temperature-dependent phosphorylation.

It localises to the nucleus. In terms of biological role, DNA-binding transcription factor that specifically binds heat shock promoter elements (HSE) and activates transcription. The protein is Heat shock transcription factor of Kluyveromyces lactis (strain ATCC 8585 / CBS 2359 / DSM 70799 / NBRC 1267 / NRRL Y-1140 / WM37) (Yeast).